Reading from the N-terminus, the 84-residue chain is Large ribosomal subunit protein bL31B (84 aa).

Belongs to the bacterial ribosomal protein bL31 family. Type B subfamily. Part of the 50S ribosomal subunit.

This chain is Large ribosomal subunit protein bL31B, found in Phocaeicola vulgatus (strain ATCC 8482 / DSM 1447 / JCM 5826 / CCUG 4940 / NBRC 14291 / NCTC 11154) (Bacteroides vulgatus).